A 545-amino-acid polypeptide reads, in one-letter code: Cannabidiolic acid synthase-like 2 (545 aa).

A signal peptide spans 1–28 (MKCSTFCFWYVCKIIFFFLSFNIQISIA). A disulfide bridge connects residues C37 and C99. N-linked (GlcNAc...) asparagine glycans are attached at residues N45, N65, N89, and N168. The 175-residue stretch at 77–251 (TTPKPLVITT…AAWKIRLVAV (175 aa)) folds into the FAD-binding PCMH-type domain. Residues 114–176 (HDAEGMSYIS…ENLSFPAGYC (63 aa)) constitute a cross-link (6-(S-cysteinyl)-8alpha-(pros-histidyl)-FAD (His-Cys)). A substrate-binding site is contributed by H292. N-linked (GlcNAc...) asparagine glycosylation is found at N297, N305, N329, and N361. Position 417 (Y417) interacts with substrate. N467 carries an N-linked (GlcNAc...) asparagine glycan. Catalysis depends on Y484, which acts as the Proton acceptor. An N-linked (GlcNAc...) asparagine glycan is attached at N499.

It belongs to the oxygen-dependent FAD-linked oxidoreductase family. Requires FAD as cofactor. Post-translationally, the FAD cofactor is bound via a bicovalent 6-S-cysteinyl, 8alpha-N1-histidyl FAD linkage.

It is found in the secreted. Its function is as follows. Has no cannabidiolic acid synthase activity. The protein is Cannabidiolic acid synthase-like 2 (CBDAS3) of Cannabis sativa (Hemp).